The primary structure comprises 100 residues: MTKVQPRALADLIKRPIITEKATVLLENNQYTFDVDRRATKPQIKAAIEELFNVKVTAVNTYHLPPKERRVGRFVGRRPRYKRAIVTLAPDSKIVLFPEV.

It belongs to the universal ribosomal protein uL23 family. In terms of assembly, part of the 50S ribosomal subunit. Contacts protein L29, and trigger factor when it is bound to the ribosome.

Functionally, one of the early assembly proteins it binds 23S rRNA. One of the proteins that surrounds the polypeptide exit tunnel on the outside of the ribosome. Forms the main docking site for trigger factor binding to the ribosome. In Thermosynechococcus vestitus (strain NIES-2133 / IAM M-273 / BP-1), this protein is Large ribosomal subunit protein uL23.